Here is a 539-residue protein sequence, read N- to C-terminus: RING finger protein 37 (539 aa).

Residues 226–249 form a disordered region; that stretch reads PALPMESDCDPGGQSESQHSPCTL. The span at 239 to 249 shows a compositional bias: polar residues; that stretch reads QSESQHSPCTL. A U-box domain is found at 258-338; it reads DVPEEFLDPI…DRFLLQHSIS (81 aa). Disordered stretches follow at residues 359-399 and 456-479; these read LPSR…EPTA and GTRG…VSGP. Residues 374–395 are compositionally biased toward low complexity; it reads HYSLGMSASSSATSPLFSPTTS. The RING-type zinc finger occupies 481–526; that stretch reads CASCKQAFSSYSTNEPVYQLPCGHLLCRPCLSEKQRSQPMMCTACR.

Interacts with UBE2L3. Interacts with VCP. As to expression, expressed in testis and placenta.

The protein resides in the nucleus. It carries out the reaction S-ubiquitinyl-[E2 ubiquitin-conjugating enzyme]-L-cysteine + [acceptor protein]-L-lysine = [E2 ubiquitin-conjugating enzyme]-L-cysteine + N(6)-ubiquitinyl-[acceptor protein]-L-lysine.. Its pathway is protein modification; protein ubiquitination. May have a ubiquitin-protein ligase activity acting as an E3 ubiquitin-protein ligase or as a ubiquitin-ubiquitin ligase promoting elongation of ubiquitin chains on substrates. The sequence is that of RING finger protein 37 (Ubox5) from Mus musculus (Mouse).